Here is a 391-residue protein sequence, read N- to C-terminus: Processive diacylglycerol beta-glucosyltransferase (391 aa).

Belongs to the glycosyltransferase 28 family. UgtP subfamily.

It is found in the cell membrane. It carries out the reaction a 1,2-diacyl-3-O-(beta-D-glucopyranosyl)-sn-glycerol + UDP-alpha-D-glucose = a 1,2-diacyl-3-O-(beta-D-Glc-(1-&gt;6)-beta-D-Glc)-sn-glycerol + UDP + H(+). It catalyses the reaction a 1,2-diacyl-sn-glycerol + UDP-alpha-D-glucose = a 1,2-diacyl-3-O-(beta-D-glucopyranosyl)-sn-glycerol + UDP + H(+). It functions in the pathway glycolipid metabolism; diglucosyl-diacylglycerol biosynthesis. Its function is as follows. Processive glucosyltransferase involved in the biosynthesis of both the bilayer- and non-bilayer-forming membrane glucolipids. Is able to successively transfer two glucosyl residues to diacylglycerol (DAG), thereby catalyzing the formation of beta-monoglucosyl-DAG (3-O-(beta-D-glucopyranosyl)-1,2-diacyl-sn-glycerol) and beta-diglucosyl-DAG (3-O-(beta-D-glucopyranosyl-beta-(1-&gt;6)-D-glucopyranosyl)-1,2-diacyl-sn-glycerol). Beta-diglucosyl-DAG is the predominant glycolipid found in Bacillales and is also used as a membrane anchor for lipoteichoic acid (LTA). The sequence is that of Processive diacylglycerol beta-glucosyltransferase from Staphylococcus aureus (strain Mu3 / ATCC 700698).